Consider the following 399-residue polypeptide: Probable dual-specificity RNA methyltransferase RlmN (399 aa).

Catalysis depends on glutamate 97, which acts as the Proton acceptor. One can recognise a Radical SAM core domain in the interval tyrosine 103–serine 381. A disulfide bond links cysteine 110 and cysteine 386. The [4Fe-4S] cluster site is built by cysteine 117, cysteine 121, and cysteine 124. Residues glycine 203–glutamate 204, serine 235, serine 258–histidine 260, and asparagine 343 contribute to the S-adenosyl-L-methionine site. The S-methylcysteine intermediate role is filled by cysteine 386.

The protein belongs to the radical SAM superfamily. RlmN family. The cofactor is [4Fe-4S] cluster.

The protein localises to the cytoplasm. The enzyme catalyses adenosine(2503) in 23S rRNA + 2 reduced [2Fe-2S]-[ferredoxin] + 2 S-adenosyl-L-methionine = 2-methyladenosine(2503) in 23S rRNA + 5'-deoxyadenosine + L-methionine + 2 oxidized [2Fe-2S]-[ferredoxin] + S-adenosyl-L-homocysteine. It catalyses the reaction adenosine(37) in tRNA + 2 reduced [2Fe-2S]-[ferredoxin] + 2 S-adenosyl-L-methionine = 2-methyladenosine(37) in tRNA + 5'-deoxyadenosine + L-methionine + 2 oxidized [2Fe-2S]-[ferredoxin] + S-adenosyl-L-homocysteine. In terms of biological role, specifically methylates position 2 of adenine 2503 in 23S rRNA and position 2 of adenine 37 in tRNAs. This Roseiflexus sp. (strain RS-1) protein is Probable dual-specificity RNA methyltransferase RlmN.